We begin with the raw amino-acid sequence, 548 residues long: Mannosyltransferase APTG1 (548 aa).

The disordered stretch occupies residues 1 to 23; that stretch reads MDIRKRKNAGGDGDGGADGASVN. A run of 3 helical transmembrane segments spans residues 41–61, 98–118, and 146–166; these read IFLFCLAFRVVNALLIQTYFN, LFAFLYKLLQVTGLDTPYIMI, and GNVATWSLFCQMANWFIFFCL. Residue N167 is glycosylated (N-linked (GlcNAc...) asparagine). 7 helical membrane passes run 169-189, 204-224, 238-258, 260-280, 294-314, 320-340, and 342-362; these read TFSNCLETVLTIMGLYYWPCI, LVIAALACAIRPTSAVIWLYV, FIILEVIPIGSLVLGFTCLLD, LMYGSWVIVPLNFLKFNFLSS, FTQGFLVMLFTFTPFSIAGII, KLSALILWVLAIYSILGHKEF, and FVLPVLPIALIFSGYAFAQME. A glycan (N-linked (GlcNAc...) asparagine) is linked at N382. The chain crosses the membrane as a helical span at residues 392–412; the sequence is LSVYFLLATNIPMALYMSLFH. N-linked (GlcNAc...) asparagine glycosylation is present at N490.

It belongs to the glycosyltransferase 22 family. As to expression, mostly expressed, mainly in vascular tissues, in leaves, roots, stems, flowers, siliques and pollen, and, to a lower extent, in seedlings.

It localises to the endoplasmic reticulum membrane. In terms of biological role, mannosyltransferase involved in glycosylphosphatidylinositol-anchor biosynthesis. Required for the pollen tube micropylar guidance and embryo development by regulating GPI-anchor mediated protein localization (e.g. COBL10 and A36). The protein is Mannosyltransferase APTG1 of Arabidopsis thaliana (Mouse-ear cress).